A 482-amino-acid polypeptide reads, in one-letter code: Bifunctional protein HldE (482 aa).

A ribokinase region spans residues 1-322 (MFGLESKSPK…QYIHTQPSNL (322 aa)). An ATP-binding site is contributed by 198–201 (NKKE). Aspartate 267 is a catalytic residue. Positions 350–482 (FTNGCFDILH…IQRSKICKHS (133 aa)) are cytidylyltransferase.

The protein in the N-terminal section; belongs to the carbohydrate kinase PfkB family. In the C-terminal section; belongs to the cytidylyltransferase family. As to quaternary structure, homodimer.

It catalyses the reaction D-glycero-beta-D-manno-heptose 7-phosphate + ATP = D-glycero-beta-D-manno-heptose 1,7-bisphosphate + ADP + H(+). The enzyme catalyses D-glycero-beta-D-manno-heptose 1-phosphate + ATP + H(+) = ADP-D-glycero-beta-D-manno-heptose + diphosphate. It participates in nucleotide-sugar biosynthesis; ADP-L-glycero-beta-D-manno-heptose biosynthesis; ADP-L-glycero-beta-D-manno-heptose from D-glycero-beta-D-manno-heptose 7-phosphate: step 1/4. Its pathway is nucleotide-sugar biosynthesis; ADP-L-glycero-beta-D-manno-heptose biosynthesis; ADP-L-glycero-beta-D-manno-heptose from D-glycero-beta-D-manno-heptose 7-phosphate: step 3/4. The protein operates within bacterial outer membrane biogenesis; LPS core biosynthesis. In terms of biological role, catalyzes the phosphorylation of D-glycero-D-manno-heptose 7-phosphate at the C-1 position to selectively form D-glycero-beta-D-manno-heptose-1,7-bisphosphate. Functionally, catalyzes the ADP transfer from ATP to D-glycero-beta-D-manno-heptose 1-phosphate, yielding ADP-D-glycero-beta-D-manno-heptose. This chain is Bifunctional protein HldE, found in Helicobacter hepaticus (strain ATCC 51449 / 3B1).